Here is a 620-residue protein sequence, read N- to C-terminus: 1-deoxy-D-xylulose-5-phosphate synthase (620 aa).

Thiamine diphosphate is bound by residues His80 and 121–123 (GHS). Asp152 is a Mg(2+) binding site. Residues 153 to 154 (GA), Asn181, Tyr288, and Glu370 each bind thiamine diphosphate. Asn181 is a Mg(2+) binding site.

Belongs to the transketolase family. DXPS subfamily. As to quaternary structure, homodimer. Mg(2+) is required as a cofactor. The cofactor is thiamine diphosphate.

The enzyme catalyses D-glyceraldehyde 3-phosphate + pyruvate + H(+) = 1-deoxy-D-xylulose 5-phosphate + CO2. The protein operates within metabolic intermediate biosynthesis; 1-deoxy-D-xylulose 5-phosphate biosynthesis; 1-deoxy-D-xylulose 5-phosphate from D-glyceraldehyde 3-phosphate and pyruvate: step 1/1. In terms of biological role, catalyzes the acyloin condensation reaction between C atoms 2 and 3 of pyruvate and glyceraldehyde 3-phosphate to yield 1-deoxy-D-xylulose-5-phosphate (DXP). The sequence is that of 1-deoxy-D-xylulose-5-phosphate synthase from Salmonella paratyphi A (strain ATCC 9150 / SARB42).